Consider the following 147-residue polypeptide: Sec-independent protein translocase protein TatB (147 aa).

A helical membrane pass occupies residues 2–22 (FDGIGFMELLLIGVLGLVVLG). The disordered stretch occupies residues 68-147 (ESKGLSNLSP…DTRSNPKANG (80 aa)). Polar residues predominate over residues 71-97 (GLSNLSPELQESIDQLKQAAQSVNRPY). Positions 112–133 (PASQSVSSEASPTASSAPTSEP) are enriched in low complexity.

It belongs to the TatB family. In terms of assembly, the Tat system comprises two distinct complexes: a TatABC complex, containing multiple copies of TatA, TatB and TatC subunits, and a separate TatA complex, containing only TatA subunits. Substrates initially bind to the TatABC complex, which probably triggers association of the separate TatA complex to form the active translocon.

It is found in the cell inner membrane. Functionally, part of the twin-arginine translocation (Tat) system that transports large folded proteins containing a characteristic twin-arginine motif in their signal peptide across membranes. Together with TatC, TatB is part of a receptor directly interacting with Tat signal peptides. TatB may form an oligomeric binding site that transiently accommodates folded Tat precursor proteins before their translocation. The protein is Sec-independent protein translocase protein TatB of Shewanella sp. (strain MR-4).